The primary structure comprises 1513 residues: MAERANLVFQNKEIDGTAMKRLISRLIDHFGMGYTSHILDQIKTLGFHQATTTSISLGIEDLLTIPSKGWLVQDAEQQSFLLEKHYYYGAVHAVEKLRQSVEIWYATSEYLKHEMNSNFRITDPSNPVYLMSFSGARGNASQVHQLVGMRGLMADPQGQMIDLPIQSNLREGLSLTEYIISCYGARKGVVDTAVRTADAGYLTRRLVEVVQHIIVRRRDCGTIQAISVSPQNGMTEKLFVQTLIGRVLANDIYIGSRCIATRNQDIGIGLVNRFITTFRAQPFRAQPIYIRTPFTCRSTSWICQLCYGRSSTHGDLVELGEAVGVIAGQSIGEPGTQLTLRTFHTGGVFTGGTADLVRSPSNGKIQFNGDLVHPTRTRHGQPAFLCYIDLHITIQSQDILHSVTIPSKSLILVQNDQYVESEQVIAEIRAGTSALHFKEKVQKHIYSESDGEMHWSTDVYHAPEYQYGNLRRLPKTSHLWILSVSMCRSSIASFSLHKDQDQMNTYSFSVDGRYIFGLSMADDEVRHRLLDTFGKKDREILDYSTPDRIMSNGHWNFVYPSILQNNFDLLAKKRRNRFAIPLQYHQEQEKEPISCFGISIEIPFMGVLRRNTIVAYFDDPRYKKDKKGSGIVKFRYRTLEDEYRTREKDSENEYGSPENEYRTREEECKTLEDEYRTREEEYETLEDEYGIPENEYETLEDEYGILEDEYRTREEESEDEYGSPENKYRPREDKYGTLEEDSEDEHGTLEEDSEEDSEDEYGNPEEDSVLKKGVLIEHRGTKEFSLKYQKEVDRFFFILQELHILPRSSSLKVLDNSIIGVDTQLTKNTRSRLGGLVRVKRKKSHTELKIFSGDIHFPEEADKILGGSLIPLEREKKDSKESKKRENWVYVQWKKILKSKEKYFVLVRPAVAYEMNEGRNLATLFPQDLLQEEGNLQLRLVNFISHENSKLTQRIYHTNSQFVRTCLVLNWEQEEKEEARASLVEIRANGLIRDFLRIGLIKSTISYTRKRYDSRSAGLILHNRLDRTNTNSFYSKAKIQSLSQHQEAIGTLLNRNKEYQSLMVLSASNCSRIGFFKNSKNPNGVKESNPRIPIPKFFGLFRNFSGLLGTIAPSISNFSSSYYLLTYNQILLKKHLLLDNLKQNFKVLQGLKHSLINENQRTSNFDSNIMLDPFQLNWHFLPHDSWEETSAKIHLGQFICENVCLFKSHIKKSGQIFIVNIDSFVIRAAKPYLATTGATVHGHYGEILYKGDRLVTFIYEKARSSDITQGLPKVEQIFEARSIDSLSPNLERRIEDWNERIPRILGGPWGFLIGAELTIAQSRISLVNKIQKVYRSQGVQIHNRHIEIIIRQVTSKVRVSEDGMSNVFSPGELIGLLRAERAGRALDESIYYRAILLGITRVSLNTQSFISEASFQETARVLAKAALRGRIDWLKGLKENVVLGGIIPVGTGFQKFVHRYPQDKNLYFEIQKKKLFASEMRDILFLHTELVSSDSDVTNNFYETSESPFTPFI.

Zn(2+)-binding residues include Cys220, Cys296, Cys303, and Cys306. The tract at residues 644–769 is disordered; it reads RTREKDSENE…EYGNPEEDSV (126 aa). Over residues 659–679 the composition is skewed to basic and acidic residues; that stretch reads NEYRTREEECKTLEDEYRTRE. Residues 680–707 show a composition bias toward acidic residues; the sequence is EEYETLEDEYGIPENEYETLEDEYGILE. Residues 726-737 are compositionally biased toward basic and acidic residues; it reads NKYRPREDKYGT. Positions 738–767 are enriched in acidic residues; it reads LEEDSEDEHGTLEEDSEEDSEDEYGNPEED.

This sequence belongs to the RNA polymerase beta' chain family. RpoC2 subfamily. As to quaternary structure, in plastids the minimal PEP RNA polymerase catalytic core is composed of four subunits: alpha, beta, beta', and beta''. When a (nuclear-encoded) sigma factor is associated with the core the holoenzyme is formed, which can initiate transcription. It depends on Zn(2+) as a cofactor.

The protein resides in the plastid. It is found in the chloroplast. It carries out the reaction RNA(n) + a ribonucleoside 5'-triphosphate = RNA(n+1) + diphosphate. Functionally, DNA-dependent RNA polymerase catalyzes the transcription of DNA into RNA using the four ribonucleoside triphosphates as substrates. This is DNA-directed RNA polymerase subunit beta'' from Oryza nivara (Indian wild rice).